The following is a 486-amino-acid chain: Vacuolar-processing enzyme beta-isozyme (486 aa).

The N-terminal stretch at methionine 1–alanine 21 is a signal peptide. The active site involves histidine 169. Residue cysteine 211 is the Nucleophile of the active site. Cysteine 244 and cysteine 258 form a disulfide bridge. A glycan (N-linked (GlcNAc...) asparagine) is linked at asparagine 309. Intrachain disulfides connect cysteine 420-cysteine 450 and cysteine 432-cysteine 467.

This sequence belongs to the peptidase C13 family. In terms of processing, auto-catalytic activation. Seed specific. Also expressed in the flowers and buds.

It localises to the vacuole. The protein resides in the protein storage vacuole. It carries out the reaction Hydrolysis of proteins and small molecule substrates at -Asn-|-Xaa- bonds.. Functionally, asparagine-specific endopeptidase involved in the processing of vacuolar seed protein precursors into the mature forms. Probably involved in post-translational proteolysis of seed storage proteins in the protein storage vacuole of developing seeds. In Arabidopsis thaliana (Mouse-ear cress), this protein is Vacuolar-processing enzyme beta-isozyme.